The chain runs to 411 residues: NADH-quinone oxidoreductase subunit H (411 aa).

The next 9 helical transmembrane spans lie at 18-38 (LAKS…AILI), 84-104 (WIYL…FAVI), 124-144 (LPVA…GIVL), 165-185 (VISY…YAGT), 198-218 (TWYI…MVGE), 260-280 (VSAL…PISI), 288-308 (WWPL…FMWL), 321-341 (MALG…IVAI), and 352-372 (APAT…ALLG).

The protein belongs to the complex I subunit 1 family. In terms of assembly, NDH-1 is composed of 14 different subunits. Subunits NuoA, H, J, K, L, M, N constitute the membrane sector of the complex.

It localises to the cell membrane. The enzyme catalyses a quinone + NADH + 5 H(+)(in) = a quinol + NAD(+) + 4 H(+)(out). NDH-1 shuttles electrons from NADH, via FMN and iron-sulfur (Fe-S) centers, to quinones in the respiratory chain. The immediate electron acceptor for the enzyme in this species is believed to be menaquinone. Couples the redox reaction to proton translocation (for every two electrons transferred, four hydrogen ions are translocated across the cytoplasmic membrane), and thus conserves the redox energy in a proton gradient. This subunit may bind ubiquinone. The polypeptide is NADH-quinone oxidoreductase subunit H (Mycolicibacterium vanbaalenii (strain DSM 7251 / JCM 13017 / BCRC 16820 / KCTC 9966 / NRRL B-24157 / PYR-1) (Mycobacterium vanbaalenii)).